A 211-amino-acid chain; its full sequence is Imidazole glycerol phosphate synthase subunit HisH (211 aa).

One can recognise a Glutamine amidotransferase type-1 domain in the interval 5-211; it reads SVALLDYGSG…QLLRNWVDSL (207 aa). The active-site Nucleophile is the Cys-83. Active-site residues include His-192 and Glu-194.

As to quaternary structure, heterodimer of HisH and HisF.

The protein localises to the cytoplasm. The enzyme catalyses 5-[(5-phospho-1-deoxy-D-ribulos-1-ylimino)methylamino]-1-(5-phospho-beta-D-ribosyl)imidazole-4-carboxamide + L-glutamine = D-erythro-1-(imidazol-4-yl)glycerol 3-phosphate + 5-amino-1-(5-phospho-beta-D-ribosyl)imidazole-4-carboxamide + L-glutamate + H(+). The catalysed reaction is L-glutamine + H2O = L-glutamate + NH4(+). It functions in the pathway amino-acid biosynthesis; L-histidine biosynthesis; L-histidine from 5-phospho-alpha-D-ribose 1-diphosphate: step 5/9. Its function is as follows. IGPS catalyzes the conversion of PRFAR and glutamine to IGP, AICAR and glutamate. The HisH subunit catalyzes the hydrolysis of glutamine to glutamate and ammonia as part of the synthesis of IGP and AICAR. The resulting ammonia molecule is channeled to the active site of HisF. In Nocardia farcinica (strain IFM 10152), this protein is Imidazole glycerol phosphate synthase subunit HisH.